The chain runs to 715 residues: MLKKVFETTNLKDSFQVEIGTYARNVDSSILVRYQDTVVLTTMVFSRKPNNLDFLPLTVIYQEKLYAAGKIPGSFLRREGRSNDHEILTSRLIDRSLRPLFPDYFQQEVQVINTVLSLDPDFKSELASMLGSSLSLLISEIPFFEAISGVYVGKINNEFIINPTLQQLANSTLHLIVAGTKHNVTMIEAHANEVSEQDFLEAINFAHQYIKKLCLFQENIKQQFAPVKMTKTLHQTEQIQQQSFFAKNHSQVKQAILSCNSKNDLQQLKEQILDQAKQTPFFKTIDAITVFDYEAHKKHLQITENLFQKLSKQEMRSLILQEKIRPDKRELEEIRTLESQIDLLPRAHGSALFTRGKTQSLAAVTLGCLSESKIIDGLSDEQNKRFMLHYNFPPFSVGAVGRYTAPSRREIGHGTLAEKAISQVLPEEKDFPYTIRVVSEILESNGSSSQATVCSSSLALMASGVPLKKAVAGISVGLVFDQETNKYVILSDIQGLEDHVGDMDLKIAGTNKGITALQMDLKIQGIPFKILQEAFLQAKKGRLHILEQMNQTISQPRLEVSKYAPKVCMMQIKPEKIRDIIGSGGKIINQIIESHDGVKIDIEQDGRVFVMHSNLETVKKTVAFIESLIQEIQVGTCYQASILRFLSDKQGKMIGAVAQVCPGIEGLIHVNKMKFQKITDVLKIGETVLVKCTKINERGRIDFLLLPKKTQEKNS.

Residues D498 and D504 each contribute to the Mg(2+) site. The KH domain maps to 565-625 (PKVCMMQIKP…ETVKKTVAFI (61 aa)). The S1 motif domain occupies 635–709 (GTCYQASILR…RIDFLLLPKK (75 aa)).

The protein belongs to the polyribonucleotide nucleotidyltransferase family. Mg(2+) serves as cofactor.

It is found in the cytoplasm. The enzyme catalyses RNA(n+1) + phosphate = RNA(n) + a ribonucleoside 5'-diphosphate. Functionally, involved in mRNA degradation. Catalyzes the phosphorolysis of single-stranded polyribonucleotides processively in the 3'- to 5'-direction. In Aster yellows witches'-broom phytoplasma (strain AYWB), this protein is Polyribonucleotide nucleotidyltransferase.